The chain runs to 614 residues: Zinc finger protein 276 (614 aa).

The disordered stretch occupies residues 1-50 (MKRDRLGRFLSPGSSRQCGASDGGGGVSRTRGRPSLSGGPRVDGATARRA). The 87-residue stretch at 77-163 (GHCRLCHGKF…LQRVNASPAG (87 aa)) folds into the ZAD domain. Residues C79, C82, C136, and C139 each coordinate Zn(2+). The segment at 268–420 (APRLPQHRGW…KKPGPKPGWK (153 aa)) is disordered. Residues 357-369 (SDLSEGDVLSEDE) show a composition bias toward acidic residues. Residues 386–408 (YPERKVSGKKSESKEAKKSEEPR) are compositionally biased toward basic and acidic residues. The span at 409–420 (IRKKPGPKPGWK) shows a compositional bias: basic residues. 5 C2H2-type zinc fingers span residues 434 to 458 (YKCP…IKEH), 465 to 490 (RPCP…KLIH), 496 to 518 (YICD…QMRH), 524 to 546 (LQCE…MTKH), and 554 to 577 (FACD…SMVH). The tract at residues 583-614 (QDKALPLEAEPPPGPPSPSVTTEGQAVKPEPT) is disordered. Residues 591–600 (AEPPPGPPSP) show a composition bias toward pro residues.

The protein resides in the nucleus. It is found in the chromosome. It localises to the centromere. Its subcellular location is the kinetochore. Its function is as follows. May be involved in transcriptional regulation. The polypeptide is Zinc finger protein 276 (ZNF276) (Homo sapiens (Human)).